The sequence spans 599 residues: Crinkler effector protein 8 (599 aa).

Positions 1-17 (MVTLFCAVVGVAGSTFP) are cleaved as a signal peptide. Positions 18–52 (VDINENKSVGHLKKAIKEEKMYQFPADELQLFLAK) are LQLFLAK domain. An N-linked (GlcNAc...) asparagine glycan is attached at Asn23. The interval 53–109 (AGGNAWLSSLTEDVKKLKKGEKTALVKSLTQEEKELQGEDPISECLEGMDPPKVKQI) is DWL domain. Positions 110–116 (HVLVALP) match the HVLVXXP motif motif. Positions 117–590 (PGTSSAPISD…EAAEQESQGK (474 aa)) are C-terminal D2 effector domain. A phosphoserine mark is found at Ser249, Ser281, and Ser385. Residues 289–590 (LSKKLVWSYG…EAAEQESQGK (302 aa)) form the Protein kinase domain. Asp470 (proton acceptor) is an active-site residue. A phosphoserine mark is found at Ser474 and Ser587. The interval 577 to 599 (RFEREAAEQESQGKGVRKKHRRA) is disordered. The Host nuclear localization signal motif lies at 590–599 (KGVRKKHRRA).

In the N-terminal section; belongs to the Crinkler effector family. It in the C-terminal section; belongs to the protein kinase superfamily. In terms of assembly, dimerizes in host plants. Post-translationally, autophosphorylated at Ser-249, Ser-281, Ser-385, Ser-474 and Ser-587. Additional serines or threonines are also targeted for phosphorylation.

The protein localises to the secreted. It is found in the host nucleus. It carries out the reaction L-seryl-[protein] + ATP = O-phospho-L-seryl-[protein] + ADP + H(+). It catalyses the reaction L-threonyl-[protein] + ATP = O-phospho-L-threonyl-[protein] + ADP + H(+). Functionally, secreted effector that induces cell death when expressed in host plants. Acts as a kinase and is able to autophosphorylate, however its cell death inducing ability is not a direct result of its kinase activity, but rather a consequence of the phosphorylated state of the five identified serine residues in the CRN8 protein. The polypeptide is Crinkler effector protein 8 (Phytophthora infestans (Potato late blight agent)).